We begin with the raw amino-acid sequence, 603 residues long: Arginine--tRNA ligase (603 aa).

Positions 143-153 (PNIAKEMHVGH) match the 'HIGH' region motif.

It belongs to the class-I aminoacyl-tRNA synthetase family. As to quaternary structure, monomer.

The protein resides in the cytoplasm. It carries out the reaction tRNA(Arg) + L-arginine + ATP = L-arginyl-tRNA(Arg) + AMP + diphosphate. In Prochlorococcus marinus (strain SARG / CCMP1375 / SS120), this protein is Arginine--tRNA ligase.